Here is a 333-residue protein sequence, read N- to C-terminus: Adenosine deaminase (333 aa).

Residues histidine 12 and histidine 14 each contribute to the Zn(2+) site. Residues histidine 14, aspartate 16, and glycine 170 each coordinate substrate. Histidine 197 lines the Zn(2+) pocket. Catalysis depends on glutamate 200, which acts as the Proton donor. Aspartate 278 provides a ligand contact to Zn(2+). Aspartate 279 lines the substrate pocket.

Belongs to the metallo-dependent hydrolases superfamily. Adenosine and AMP deaminases family. Adenosine deaminase subfamily. Zn(2+) serves as cofactor.

The enzyme catalyses adenosine + H2O + H(+) = inosine + NH4(+). It carries out the reaction 2'-deoxyadenosine + H2O + H(+) = 2'-deoxyinosine + NH4(+). In terms of biological role, catalyzes the hydrolytic deamination of adenosine and 2-deoxyadenosine. The sequence is that of Adenosine deaminase from Pseudoalteromonas translucida (strain TAC 125).